We begin with the raw amino-acid sequence, 375 residues long: Probable aspartate aminotransferase (375 aa).

Residues glycine 31 and asparagine 165 each coordinate L-aspartate. Residue lysine 223 is modified to N6-(pyridoxal phosphate)lysine. Position 353 (arginine 353) interacts with L-aspartate.

Belongs to the class-I pyridoxal-phosphate-dependent aminotransferase family. Homodimer. Pyridoxal 5'-phosphate is required as a cofactor.

It localises to the cytoplasm. The catalysed reaction is L-aspartate + 2-oxoglutarate = oxaloacetate + L-glutamate. This Methanocaldococcus jannaschii (strain ATCC 43067 / DSM 2661 / JAL-1 / JCM 10045 / NBRC 100440) (Methanococcus jannaschii) protein is Probable aspartate aminotransferase.